The chain runs to 456 residues: uncharacterized protein (456 aa).

The TRAM domain occupies 3–61 (TIKKNEVKTGKVIDLTHEGHGVVKVDRYPIFIPNALIDEEIKFKLIKVKKNFAIGKLIE). The [4Fe-4S] cluster site is built by C74, C80, C83, and C162. The S-adenosyl-L-methionine site is built by Q286, Y315, E336, and D384. C411 acts as the Nucleophile in catalysis.

This sequence belongs to the class I-like SAM-binding methyltransferase superfamily. RNA M5U methyltransferase family.

This is an uncharacterized protein from Staphylococcus epidermidis (strain ATCC 35984 / DSM 28319 / BCRC 17069 / CCUG 31568 / BM 3577 / RP62A).